The following is a 439-amino-acid chain: Dolichyl-diphosphooligosaccharide--protein glycosyltransferase 48 kDa subunit (439 aa).

The N-terminal stretch at 1–25 (MELGAAARAWSLLWLLLPLLGLVGA) is a signal peptide. At 27–410 (GPRTLVLLDN…YERFIPSAYP (384 aa)) the chain is on the lumenal side. A helical membrane pass occupies residues 411-430 (YYASAFSMMVGLFIFSVVFL). At 431 to 439 (HMKEKEKSD) the chain is on the cytoplasmic side.

It belongs to the DDOST 48 kDa subunit family. In terms of assembly, component of the oligosaccharyltransferase (OST) complex. OST exists in two different complex forms which contain common core subunits RPN1, RPN2, OST48, OST4, DAD1 and TMEM258, either STT3A or STT3B as catalytic subunits, and form-specific accessory subunits. STT3A complex assembly occurs through the formation of 3 subcomplexes. Subcomplex 1 contains RPN1 and TMEM258, subcomplex 2 contains the STT3A-specific subunits STT3A, DC2/OSTC, and KCP2 as well as the core subunit OST4, and subcomplex 3 contains RPN2, DAD1, and OST48. The STT3A complex can form stable complexes with the Sec61 complex or with both the Sec61 and TRAP complexes. Interacts with SMIM22.

The protein resides in the endoplasmic reticulum membrane. The protein operates within protein modification; protein glycosylation. In terms of biological role, subunit of the oligosaccharyl transferase (OST) complex that catalyzes the initial transfer of a defined glycan (Glc(3)Man(9)GlcNAc(2) in eukaryotes) from the lipid carrier dolichol-pyrophosphate to an asparagine residue within an Asn-X-Ser/Thr consensus motif in nascent polypeptide chains, the first step in protein N-glycosylation. N-glycosylation occurs cotranslationally and the complex associates with the Sec61 complex at the channel-forming translocon complex that mediates protein translocation across the endoplasmic reticulum (ER). All subunits are required for a maximal enzyme activity. Required for the assembly of both SST3A- and SS3B-containing OST complexes. The chain is Dolichyl-diphosphooligosaccharide--protein glycosyltransferase 48 kDa subunit from Sus scrofa (Pig).